Consider the following 25-residue polypeptide: Omega-conotoxin MVIIB (25 aa).

Disulfide bonds link C1–C16, C8–C20, and C15–C25. C25 is modified (cysteine amide).

The protein belongs to the conotoxin O1 superfamily. As to expression, expressed by the venom duct.

It localises to the secreted. In terms of biological role, omega-conotoxins act at presynaptic membranes, they bind and block voltage-gated calcium channels (Cav). The chain is Omega-conotoxin MVIIB from Conus magus (Magical cone).